A 262-amino-acid polypeptide reads, in one-letter code: 3-methyl-2-oxobutanoate hydroxymethyltransferase (262 aa).

Mg(2+) contacts are provided by Asp-44 and Asp-83. Residues 44 to 45, Asp-83, and Lys-113 each bind 3-methyl-2-oxobutanoate; that span reads DS. A Mg(2+)-binding site is contributed by Glu-115. Glu-182 functions as the Proton acceptor in the catalytic mechanism.

This sequence belongs to the PanB family. In terms of assembly, homodecamer; pentamer of dimers. The cofactor is Mg(2+).

The protein resides in the cytoplasm. It carries out the reaction 3-methyl-2-oxobutanoate + (6R)-5,10-methylene-5,6,7,8-tetrahydrofolate + H2O = 2-dehydropantoate + (6S)-5,6,7,8-tetrahydrofolate. The protein operates within cofactor biosynthesis; (R)-pantothenate biosynthesis; (R)-pantoate from 3-methyl-2-oxobutanoate: step 1/2. Its function is as follows. Catalyzes the reversible reaction in which hydroxymethyl group from 5,10-methylenetetrahydrofolate is transferred onto alpha-ketoisovalerate to form ketopantoate. This chain is 3-methyl-2-oxobutanoate hydroxymethyltransferase, found in Picosynechococcus sp. (strain ATCC 27264 / PCC 7002 / PR-6) (Agmenellum quadruplicatum).